A 270-amino-acid chain; its full sequence is Maximins-S type D (270 aa).

An N-terminal signal peptide occupies residues 1-18 (MNFNYFILVLFFITSGHA). 2 propeptides span residues 19-35 (KSET…HIKR) and 52-65 (SAEE…LVTR). Asn83 carries the post-translational modification Asparagine amide. Positions 87-100 (SAEEQDLAEDLVTR) are excised as a propeptide. The residue at position 118 (Lys118) is a Lysine amide. The propeptide occupies 122–135 (SAEDQDLAEDLVTR). Asn153 carries the post-translational modification Asparagine amide. The propeptide occupies 157-170 (SAEEQDLAEHLVTR). Asn188 carries the post-translational modification Asparagine amide. Residues 192–205 (SAEEQDLVEDLVTR) constitute a propeptide that is removed on maturation. Residue Lys223 is modified to Lysine amide. The propeptide occupies 227-240 (SAEEQDLAEDLVTR). Lysine amide is present on Lys258. The propeptide occupies 262 to 270 (SAEQEKDMK).

It belongs to the maximin-S family. As to expression, expressed by the skin dorsal glands.

The protein resides in the secreted. Functionally, maximin-S1 has no antimicrobial activity. Has no hemolytic activity. Maximin-S2 has an activity against mycoplasma but has no activity against common Gram-positive and Gram-negative bacteria nor fungi. Has no hemolytic activity. In terms of biological role, maximin-S3 has an activity against mycoplasma but has no activity against common Gram-positive and Gram-negative bacteria nor fungi. Has no hemolytic activity. Its function is as follows. Maximin-S4 has an activity against mycoplasma but has no activity against common Gram-positive and Gram-negative bacteria nor fungi. Has no hemolytic activity. Functionally, maximin-S5 has an activity against mycoplasma but has no activity against common Gram-positive and Gram-negative bacteria nor fungi. Has no hemolytic activity. The polypeptide is Maximins-S type D (Bombina maxima (Giant fire-bellied toad)).